We begin with the raw amino-acid sequence, 199 residues long: Molybdenum cofactor guanylyltransferase (199 aa).

GTP-binding positions include 12–14, Lys-25, Asn-53, Asp-71, and Asp-101; that span reads LAG. Residue Asp-101 participates in Mg(2+) binding.

Belongs to the MobA family. Monomer. The cofactor is Mg(2+).

Its subcellular location is the cytoplasm. It catalyses the reaction Mo-molybdopterin + GTP + H(+) = Mo-molybdopterin guanine dinucleotide + diphosphate. Transfers a GMP moiety from GTP to Mo-molybdopterin (Mo-MPT) cofactor (Moco or molybdenum cofactor) to form Mo-molybdopterin guanine dinucleotide (Mo-MGD) cofactor. The sequence is that of Molybdenum cofactor guanylyltransferase from Cupriavidus necator (strain ATCC 17699 / DSM 428 / KCTC 22496 / NCIMB 10442 / H16 / Stanier 337) (Ralstonia eutropha).